Consider the following 584-residue polypeptide: Poly(A) RNA polymerase protein 2 (584 aa).

The span at 1–11 (MGAKSVTASSS) shows a compositional bias: polar residues. Disordered stretches follow at residues 1-63 (MGAK…LPKD) and 81-147 (EGFD…QELE). Residues 12-35 (KKIKNRHNGKVKKSKKIKKVRKPQ) show a composition bias toward basic residues. Over residues 53-63 (NEQETNKLPKD) the composition is skewed to basic and acidic residues. The span at 130–139 (SEDEQAEQEE) shows a compositional bias: acidic residues. Residues Asp-236 and Asp-238 each coordinate Mg(2+). Residues Gly-301, Lys-326, Asn-431, and Arg-435 each coordinate ATP. The 61-residue stretch at 371–431 (NLGVLLIEFF…AIQDPGDESN (61 aa)) folds into the PAP-associated domain. The interval 525–584 (TSTATATTTDDDYEITNPPAKKAKIEEKPESEPAKRNSGETYITVSSEDDDEDGYNPYTL) is disordered. Over residues 547 to 562 (AKIEEKPESEPAKRNS) the composition is skewed to basic and acidic residues.

The protein belongs to the DNA polymerase type-B-like family. As to quaternary structure, component of the TRAMP complex (also called TRF4 complex) composed of at least HUL4, MTR4, PAP2/TRF4 and either AIR1 or AIR2. Interacts with NOP53 and POL2. Interacts directly with AIR2. Mg(2+) serves as cofactor. The cofactor is Mn(2+).

The protein resides in the nucleus. The catalysed reaction is RNA(n) + ATP = RNA(n)-3'-adenine ribonucleotide + diphosphate. In terms of biological role, catalytic subunit of the TRAMP complex which has a poly(A) RNA polymerase activity and is involved in a post-transcriptional quality control mechanism limiting inappropriate expression of genetic information. Polyadenylation is required for the degradative activity of the exosome on several of its nuclear RNA substrates like cryptic transcripts generated by RNA polymerase II and III, or hypomethylated pre-tRNAi-Met. Polyadenylates RNA processing and degradation intermediates of snRNAs, snoRNAs and mRNAs that accumulate in strains lacking a functional exosome. TRF4 is also required for proper nuclear division in mitosis, DNA damage repair and sister chromatid cohesion. Involved in the regulation of histone mRNA levels. May mediate mitotic chromosome condensation. The chain is Poly(A) RNA polymerase protein 2 (PAP2) from Saccharomyces cerevisiae (strain ATCC 204508 / S288c) (Baker's yeast).